Here is a 205-residue protein sequence, read N- to C-terminus: MSRYRGPRIKIIRRLGILPGLTRKIPKKSMKLRSLSLQSKSKKKDSQYRIRLQEKQKLRYHYGLHERQLLKYVRIARKAKGSTGQVLLQLLEMRLDNTIFRLGMAPTIPAARQLVNHGHILVNGRIVNIPSYRCKPQDSITINTRTQTIALIQQNLGTTRKTKLPSHLMLRSTENSATVKQIVSRQSVGLKINELLVVEYYSRQA.

One can recognise an S4 RNA-binding domain in the interval 93-154 (MRLDNTIFRL…RTQTIALIQQ (62 aa)).

It belongs to the universal ribosomal protein uS4 family. As to quaternary structure, part of the 30S ribosomal subunit. Contacts protein S5. The interaction surface between S4 and S5 is involved in control of translational fidelity.

It is found in the plastid. Its subcellular location is the chloroplast. Functionally, one of the primary rRNA binding proteins, it binds directly to 16S rRNA where it nucleates assembly of the body of the 30S subunit. In terms of biological role, with S5 and S12 plays an important role in translational accuracy. This chain is Small ribosomal subunit protein uS4c (rps4), found in Chaetosphaeridium globosum (Charophycean green alga).